The sequence spans 1067 residues: MSSQNSFMSSKKDDKGKNIQVVVRCRPFNQLERKASSHSVLECESQRKEVCVRTGEVNDKLGKKTYTFDMVFGPAAKQIDVYRSVVCPILDEVIMGYNCTIFAYGQTGTGKTFTMEGERSSDEEFTWEQDPLAGIIPRTLHQIFEKLSEIGTEFSVKVSLLEIYNEELFDLLSPSPDVGERLQMFDDPRNKRGVIIKGLEEISVHNKDEVYQILERGAAKRKTASTLMNAYSSRSHSVFSVTIHMKETTIDGEELVKIGKLNLVDLAGSENIGRSGAVDKRAREAGNINQSLLTLGRVITALVERAPHIPYRESKLTRILQDSLGGRTKTSIIATVSPASINLEETMSTLDYASRAKNIMNKPEVNQKLTKKALIKEYTEEIERLKRELATAREKNGVYLSNENYEQLQGKVLSQEEMITEYSEKIAAMEEEIKRIGELFADNKKELEECTTILQCKEKELEATQNNLQESKEQLAQEAFVVSAMETTEKKLHGTANKLLSTVRETTRDVSGLHEKLDRKRAVEQHNSQVHENFAEQINRRFSVIQQTVDEYSVKQQGMLDFYTNSIDDLLGASSSALSATATAVAKSFASVQETVSKQVSHSVEEILKQETLSSQAKDDLQKLMTAHRTGLEQALRTDLLPVVTAVLDLNSHLSHCLQSFLGVADKIDSHKEDMNSFFTEHSRSLHKLRLDSSSALSSIQSEYESLKEEIATAQSTHSEGVNNLISSLQNQLNLLAMETRQQFSGFLSKGGKLQESVGCLQQDLDLVSSDAIECISSHHSKFTEQSQAVTVEIRQLAGSNMSTLEESSKQCEKLTNSINTICQESQQWCESAGQKMDSLLEEQVCYLHSSKKQIQTLHKDVEDGCGSSVVEITDRVNVQCQAQEKALTSLVEQVKDDKEMLGEQRLELNEQVQSGLNKVHVYLKEELRNDVPTGTTPQRRDYVYPSLLIKTKPRDVLLEQFRQQQQEYLESICSVISEAVEPPVEQDSLEDEPPVAVNDSVISEKSCIDLSMTCQEKGGVPFFQQKKALRKEKENRGNATLLERSKIMDEVEQSLPKSKLPLRMQN.

The Kinesin motor domain occupies 18–359; the sequence is NIQVVVRCRP…LDYASRAKNI (342 aa). Residue 105-112 participates in ATP binding; the sequence is GQTGTGKT. Coiled-coil stretches lie at residues 365–480, 692–721, and 882–915; these read VNQK…QEAF, DSSS…HSEG, and QAQE…QVQS. Thr937 is modified (phosphothreonine; by CDK1). At Ser1046 the chain carries Phosphoserine; by NEK6.

It belongs to the TRAFAC class myosin-kinesin ATPase superfamily. Kinesin family. BimC subfamily. In terms of assembly, heterotetramer of two heavy and two light chains. Interacts with aurka. Post-translationally, phosphorylation of Thr-937 during mitosis controls the association of this protein with the spindle apparatus. In terms of processing, a subset of this protein primarily localized at the spindle pole is phosphorylated by NEK6 during mitosis. Phosphorylated on a serine residue by aurka. In terms of tissue distribution, highly expressed in unfertilized eggs, especially in the germinal vesicle and in the radial yolk-poor channels. Also present in testis.

Its subcellular location is the cytoplasm. The protein resides in the cytoskeleton. It is found in the spindle pole. In terms of biological role, plus end-directed motor protein required for establishing a bipolar spindle. Associates with both interphase and spindle microtubules. May be involved in nuclear divisions taking place during the development of unfertilized eggs. Required in non-mitotic cells for transport of secretory proteins from the Golgi complex to the cell surface. This is Kinesin-like protein KIF11-A (kif11-a) from Xenopus laevis (African clawed frog).